The primary structure comprises 70 residues: Peptide Hp1035 (70 aa).

Residues 1-23 (MKTQFVILLVALVLFQMFAQSEA) form the signal peptide. At F36 the chain carries Phenylalanine amide. A propeptide spanning residues 40-70 (GLQDLDMDDLDQLFDGEISQADINFLNQLMR) is cleaved from the precursor.

This sequence belongs to the non-disulfide-bridged peptide (NDBP) superfamily. Short antimicrobial peptide (group 4) family. As to expression, expressed by the venom gland.

It is found in the secreted. The protein localises to the target cell membrane. Its function is as follows. Amphipathic peptide with antimicrobial activity. This chain is Peptide Hp1035, found in Heterometrus petersii (Asian forest scorpion).